The primary structure comprises 258 residues: Small ribosomal subunit protein uS2 (258 aa).

The interval 234–258 (ETANAEEAMQKAAAVEAAAEAAPAQ) is disordered. Positions 236-258 (ANAEEAMQKAAAVEAAAEAAPAQ) are enriched in low complexity.

The protein belongs to the universal ribosomal protein uS2 family.

In Desulfovibrio desulfuricans (strain ATCC 27774 / DSM 6949 / MB), this protein is Small ribosomal subunit protein uS2.